The sequence spans 87 residues: Small ribosomal subunit protein bS20 (87 aa).

Residues Met-1 to Lys-22 are disordered.

The protein belongs to the bacterial ribosomal protein bS20 family.

Its function is as follows. Binds directly to 16S ribosomal RNA. In Clavibacter michiganensis subsp. michiganensis (strain NCPPB 382), this protein is Small ribosomal subunit protein bS20.